A 366-amino-acid polypeptide reads, in one-letter code: Spermidine/putrescine import ATP-binding protein PotA (366 aa).

Positions 8 to 239 (IRFENVTKQF…PINKFVADFI (232 aa)) constitute an ABC transporter domain. 41–48 (GPSGCGKT) contacts ATP.

This sequence belongs to the ABC transporter superfamily. Spermidine/putrescine importer (TC 3.A.1.11.1) family. In terms of assembly, the complex is composed of two ATP-binding proteins (PotA), two transmembrane proteins (PotB and PotC) and a solute-binding protein (PotD).

Its subcellular location is the cell membrane. The catalysed reaction is ATP + H2O + polyamine-[polyamine-binding protein]Side 1 = ADP + phosphate + polyamineSide 2 + [polyamine-binding protein]Side 1.. Its function is as follows. Part of the ABC transporter complex PotABCD involved in spermidine/putrescine import. Responsible for energy coupling to the transport system. This Listeria monocytogenes serovar 1/2a (strain ATCC BAA-679 / EGD-e) protein is Spermidine/putrescine import ATP-binding protein PotA.